The following is a 571-amino-acid chain: FAD-binding monooxygenase VdtE (571 aa).

FAD-binding positions include 44 to 47 (VWYW), 56 to 57 (DS), and tyrosine 62. Residue 54–56 (RVD) participates in NADP(+) binding. Residues 187 to 193 (TGASAVQ) and 210 to 211 (RT) contribute to the NADP(+) site.

This sequence belongs to the FAD-binding monooxygenase family. FAD is required as a cofactor.

The catalysed reaction is 9,10-dihydroxy-7-methoxy-3-(2-oxopropyl)-1H-benzo[g]isochromen-1-one + NADPH + O2 + H(+) = methyl 2-[(3S)-9,10-dihydroxy-7-methoxy-1-oxo-1H,3H,4H-naphtho[2,3-c]pyran-3-yl]acetate + NADP(+) + H2O. The enzyme catalyses (3S)-9,10-dihydroxy-7-methoxy-3-(2-oxopropyl)-1H,3H,4H-naphtho[2,3-c]pyran-1-one + NADPH + O2 + H(+) = semiviriditoxin + NADP(+) + H2O. It functions in the pathway secondary metabolite biosynthesis. Functionally, FAD-binding monooxygenase; part of the gene cluster that mediates the biosynthesis of viriditoxin, one of the 'classical' secondary metabolites produced by fungi and that has antibacterial activity. The first step is performed by the polyketide synthase VdtA which condenses one acetyl-CoA and 6 malonyl-CoA units to form the heptaketide monomer backbone of viriditoxin. The product of VdtA is then O-methylated on C7 by the O-methyltransferase VdtC. The O-methyl group is important for the stereoselective coupling of the monomers at the final step of viriditoxin biosynthesis. The short-chain dehydrogenase/reductase VdtF then acts as a stereospecific reductase converting the pyrone to dihydropyrone via the reduction of the C3-C4 double bond. The FAD-binding monooxygenase VdtE then converts the ketone group into a methyl-ester group to yield semi-viriditoxin. Finally, the laccase VdtB is involved in dimerization of 2 semi-viriditoxin molecules to yield the final viriditoxin. VdtB is responsible for the regioselective 6,6'-coupling of semi-viriditoxin, which yields (M)-viriditoxin and (P)-viriditoxin at a ratio of 1:2. The non-catalytic carboxylesterase-like protein VdtD affects the stereochemistical outcome of the coupling. The highly reducing polyketide synthase VdtX is not involved in viriditoxin synthesis, but might possibly play a role in the production of additional metabolites not identified yet. The chain is FAD-binding monooxygenase VdtE from Byssochlamys spectabilis (Paecilomyces variotii).